The sequence spans 382 residues: uncharacterized protein (382 aa).

11 helical membrane passes run 8-28 (VLLL…LNTL), 41-61 (WQVG…TLIA), 73-93 (SYHC…LTVD), 94-114 (FWSW…IWVI), 133-153 (AAYM…LGIV), 157-177 (LLSV…PLLF), 208-228 (GCII…LYLS), 235-255 (ASVG…QWPM), 274-294 (VVIL…ALFI), 325-345 (ALLM…SLLM), and 349-369 (SDNL…MMLL).

The protein belongs to the major facilitator superfamily. YcaD (TC 2.A.1.26) family.

The protein localises to the cell inner membrane. This is an uncharacterized protein from Yersinia pseudotuberculosis serotype IB (strain PB1/+).